Reading from the N-terminus, the 191-residue chain is dCTP deaminase (191 aa).

Residues lysine 112 to arginine 117, threonine 136 to glutamate 138, glutamine 157, tyrosine 173, and glutamine 183 each bind dCTP. Glutamate 138 (proton donor/acceptor) is an active-site residue.

This sequence belongs to the dCTP deaminase family. In terms of assembly, homotrimer.

The catalysed reaction is dCTP + H2O + H(+) = dUTP + NH4(+). It participates in pyrimidine metabolism; dUMP biosynthesis; dUMP from dCTP (dUTP route): step 1/2. Catalyzes the deamination of dCTP to dUTP. This Psychrobacter sp. (strain PRwf-1) protein is dCTP deaminase.